The primary structure comprises 711 residues: MKQLFATTSRGFEELLKVELTELGAQEAKVVQGGVHYQADDETLYRTLLWSRLASRILFPLIETKIYSDLDLYAAVSGFNWLAQFDERVTFFVDFNGTNQEIRHTQFGAMRVKDGIVDYFERQGKARPDVDKIQPDVRIHAYLNRENLVISLDLSGEALHLRGYREDAGQAPLRETLAAAIVMRSGWQAGSPLVDPMCGSGTLLIEAAQIEAKIAPQLYRLHWGFDFWKAHNQSAWEKVKNEAIELAEEKQREIQPHFYGFDLDHRVLKKAQKNAQNAGVSHLIKWQQADVAALKNPRLNEVGTVICNPPYGERLGTTPALIALYSVFGQRLKKEFCGWNVSVFSSESTLLDCLRMRASRQFKAKNGPLDCVQKNYQVSERKSDAITDEKELEFNRTSEVAPDFANRLQKNIKKISKWAKQQELDAYRLYDADLPEYNLAVDRYADYIVVQEYAAPKNIDENKARQRLLDAVTATLQVTGVETNKLILKVRQKQKGTNQYEKLANKGEYFYVNEYGTQLWVNLTDYLDTGLFLDHRLTRKMIGELAKGKDFLNLFAYTGSATVHAALGGAKSTTTVDMSNTYLNWAEQNLILNDIEGKQHKLIQADCLQWLEKCDRQFDLIFVDPPTFSNSKRMEESWDVQRDHVKLMSNLKRVLSNNGTIVFSNNKRGFKMNLVALEELGLSAVEISHKTLPLDFERNKQIHNCWMIQHI.

In terms of domain architecture, THUMP spans 43–154; the sequence is TLYRTLLWSR…RENLVISLDL (112 aa).

This sequence belongs to the methyltransferase superfamily. RlmKL family.

It is found in the cytoplasm. It carries out the reaction guanosine(2445) in 23S rRNA + S-adenosyl-L-methionine = N(2)-methylguanosine(2445) in 23S rRNA + S-adenosyl-L-homocysteine + H(+). The enzyme catalyses guanosine(2069) in 23S rRNA + S-adenosyl-L-methionine = N(2)-methylguanosine(2069) in 23S rRNA + S-adenosyl-L-homocysteine + H(+). Functionally, specifically methylates the guanine in position 2445 (m2G2445) and the guanine in position 2069 (m7G2069) of 23S rRNA. The polypeptide is Ribosomal RNA large subunit methyltransferase K/L (Haemophilus influenzae (strain PittGG)).